The primary structure comprises 635 residues: Threonine--tRNA ligase (635 aa).

Residues 1-61 (MVSIRLPDGS…DRDASLAIVT (61 aa)) enclose the TGS domain. Residues 242-533 (DHRKLGKQLD…LIEHHAGAMP (292 aa)) are catalytic. Cysteine 333, histidine 384, and histidine 510 together coordinate Zn(2+).

Belongs to the class-II aminoacyl-tRNA synthetase family. Homodimer. Requires Zn(2+) as cofactor.

It localises to the cytoplasm. It carries out the reaction tRNA(Thr) + L-threonine + ATP = L-threonyl-tRNA(Thr) + AMP + diphosphate + H(+). Functionally, catalyzes the attachment of threonine to tRNA(Thr) in a two-step reaction: L-threonine is first activated by ATP to form Thr-AMP and then transferred to the acceptor end of tRNA(Thr). Also edits incorrectly charged L-seryl-tRNA(Thr). This chain is Threonine--tRNA ligase, found in Burkholderia cenocepacia (strain ATCC BAA-245 / DSM 16553 / LMG 16656 / NCTC 13227 / J2315 / CF5610) (Burkholderia cepacia (strain J2315)).